The primary structure comprises 1212 residues: DNA-directed RNA polymerase subunit beta' (1212 aa).

Zn(2+) contacts are provided by C60, C62, C75, and C78. D450, D452, and D454 together coordinate Mg(2+). Positions 819, 893, 900, and 903 each coordinate Zn(2+).

It belongs to the RNA polymerase beta' chain family. The RNAP catalytic core consists of 2 alpha, 1 beta, 1 beta' and 1 omega subunit. When a sigma factor is associated with the core the holoenzyme is formed, which can initiate transcription. The cofactor is Mg(2+). Zn(2+) serves as cofactor.

It catalyses the reaction RNA(n) + a ribonucleoside 5'-triphosphate = RNA(n+1) + diphosphate. Its function is as follows. DNA-dependent RNA polymerase catalyzes the transcription of DNA into RNA using the four ribonucleoside triphosphates as substrates. This is DNA-directed RNA polymerase subunit beta' from Streptococcus thermophilus (strain CNRZ 1066).